The sequence spans 116 residues: Cysteine proteinase inhibitor 1 (116 aa).

Residues 1–22 (MVPKPLSLLLLLLLALSAAVVG) form the signal peptide. A Cystatin domain is found at 30–89 (GGWRPIENLNSAEVQDVAQFAVSEHNKQANDELQYQSVVRGYTQVVAGTNYRLVIAAKDG). The short motif at 73–77 (QVVAG) is the Secondary area of contact element. A glycan (N-linked (GlcNAc...) asparagine) is linked at asparagine 109.

The protein belongs to the cystatin family. Phytocystatin subfamily.

It localises to the secreted. Specific inhibitor of papain family cysteine proteinases. The protein is Cysteine proteinase inhibitor 1 of Actinidia chinensis var. chinensis (Chinese soft-hair kiwi).